A 90-amino-acid chain; its full sequence is Transcriptional repressor SdpR (90 aa).

Residues 1–87 (MNNVFKAISD…WMLNFINKGD (87 aa)) form the HTH arsR-type domain. The segment at residues 39 to 62 (PSISHHLNILKQAEVISDHRKGQF) is a DNA-binding region (H-T-H motif).

Its subcellular location is the cytoplasm. Functionally, represses the transcription of the sdpIR operon and of several other operons that probably contribute to delaying commitment to sporulation. The polypeptide is Transcriptional repressor SdpR (sdpR) (Bacillus subtilis (strain 168)).